The sequence spans 317 residues: N(5)-(carboxyethyl)ornithine synthase (317 aa).

The pyruvate site is built by Arg15, Lys71, and His92. 172 to 177 (GSGNVS) lines the NADP(+) pocket.

The protein belongs to the AlaDH/PNT family. CEOS subfamily. As to quaternary structure, homotetramer.

It catalyses the reaction N(5)-[1(S)-1-carboxyethyl]-L-ornithine + NADP(+) + H2O = L-ornithine + pyruvate + NADPH + H(+). Functionally, catalyzes the NADPH-dependent reductive condensation between pyruvic acid and the side chain amino group of L-ornithine to form N(5)-(L-1-carboxyethyl)-L-ornithine. To a lesser extent, can also use L-lysine as substrate (yielding N(6)-(L-1-carboxyethyl)-L-lysine), and the D-isomers of the 2 basic amino acids. Can use alpha-keto acids other than pyruvate, e.g. glyoxylate. The sequence is that of N(5)-(carboxyethyl)ornithine synthase (ceo) from Clostridium botulinum (strain Hall / ATCC 3502 / NCTC 13319 / Type A).